A 131-amino-acid polypeptide reads, in one-letter code: Phosphoribosyl-AMP cyclohydrolase (131 aa).

Residue Asp89 coordinates Mg(2+). Position 90 (Cys90) interacts with Zn(2+). Residues Asp91 and Asp93 each contribute to the Mg(2+) site. The Zn(2+) site is built by Cys106 and Cys113.

This sequence belongs to the PRA-CH family. In terms of assembly, homodimer. The cofactor is Mg(2+). It depends on Zn(2+) as a cofactor.

It is found in the cytoplasm. It carries out the reaction 1-(5-phospho-beta-D-ribosyl)-5'-AMP + H2O = 1-(5-phospho-beta-D-ribosyl)-5-[(5-phospho-beta-D-ribosylamino)methylideneamino]imidazole-4-carboxamide. It functions in the pathway amino-acid biosynthesis; L-histidine biosynthesis; L-histidine from 5-phospho-alpha-D-ribose 1-diphosphate: step 3/9. In terms of biological role, catalyzes the hydrolysis of the adenine ring of phosphoribosyl-AMP. This Bifidobacterium longum (strain DJO10A) protein is Phosphoribosyl-AMP cyclohydrolase.